A 273-amino-acid chain; its full sequence is 29 kDa ribonucleoprotein A, chloroplastic (273 aa).

Residues 1-58 (MASSASSLHFLSLTPQTLPLPKPTSQTTSLSFFSLPPSSLNLSLSSSSSCFSSRFVRK) constitute a chloroplast transit peptide. One can recognise an RRM 1 domain in the interval 87-165 (LKIFVGNLPF…RALRVNSGPP (79 aa)). The segment at 156 to 181 (RALRVNSGPPPEKRENSSFRGGSRGG) is disordered. Residues 166-187 (PEKRENSSFRGGSRGGGSFDSS) are linker (Gly-rich). The 79-residue stretch at 188 to 266 (NRVYVGNLAW…RAIRVSPAEA (79 aa)) folds into the RRM 2 domain.

Its subcellular location is the plastid. The protein resides in the chloroplast. Could be involved in splicing and/or processing of chloroplast RNA's. The polypeptide is 29 kDa ribonucleoprotein A, chloroplastic (Nicotiana sylvestris (Wood tobacco)).